We begin with the raw amino-acid sequence, 74 residues long: Mitochondrial import receptor subunit TOM6 homolog (74 aa).

A compositionally biased stretch (polar residues) spans 1–16 (MASSTVPVSAAGSANE). The interval 1-22 (MASSTVPVSAAGSANETPEIPD) is disordered. Alanine 2 bears the N-acetylalanine mark.

Belongs to the Tom6 family. As to quaternary structure, forms part of the preprotein translocase complex of the outer mitochondrial membrane (TOM complex) which consists of at least 7 different proteins (TOMM5, TOMM6, TOMM7, TOMM20, TOMM22, TOMM40 and TOMM70).

The protein resides in the mitochondrion outer membrane. The protein is Mitochondrial import receptor subunit TOM6 homolog (TOMM6) of Homo sapiens (Human).